We begin with the raw amino-acid sequence, 616 residues long: Homeodomain-interacting protein kinase 4 (616 aa).

The Protein kinase domain maps to 11–347 (YDIIEVLGKG…PSAALRHPFV (337 aa)). ATP-binding positions include 17 to 25 (LGKGTFGEV) and Lys-40. The active-site Proton acceptor is the Asp-136. Residues 486–616 (HKARKPPAGS…SFLQHVTGHH (131 aa)) form a disordered region. Residues 496–511 (KSDSNFSNLIRLSQVS) are compositionally biased toward polar residues. Ser-511 bears the Phosphoserine mark.

It belongs to the protein kinase superfamily. CMGC Ser/Thr protein kinase family. HIPK subfamily. Autophosphorylated.

The protein resides in the cytoplasm. The enzyme catalyses L-seryl-[protein] + ATP = O-phospho-L-seryl-[protein] + ADP + H(+). It carries out the reaction L-threonyl-[protein] + ATP = O-phospho-L-threonyl-[protein] + ADP + H(+). Protein kinase that phosphorylates human TP53 at Ser-9, and thus induces TP53 repression of BIRC5 promoter. May act as a corepressor of transcription factors (Potential). The protein is Homeodomain-interacting protein kinase 4 (HIPK4) of Homo sapiens (Human).